A 481-amino-acid polypeptide reads, in one-letter code: F-box/FBD/LRR-repeat protein At5g18770 (481 aa).

An F-box domain is found at 23-69 (EDMISALPDHLLCHILIFLSTDESVLTSVLSSRWRNLWKWVPRLDLN). 7 LRR repeats span residues 126 to 153 (KPNV…TLSA), 159 to 185 (CLKL…YLED), 186 to 211 (VVFP…KLSL), 214 to 234 (DDVV…TLKR), 236 to 261 (VPVY…SLID), 289 to 314 (DELS…TISW), and 340 to 368 (ATMS…HFTL). The FBD domain occupies 378–430 (VITGFSRVLPRCLVFSLESVEMESPITEKATELKLVRYFLENSATLKKLVLLL).

The protein is F-box/FBD/LRR-repeat protein At5g18770 of Arabidopsis thaliana (Mouse-ear cress).